Consider the following 344-residue polypeptide: tRNA(Ile)-lysidine synthase (344 aa).

35-40 provides a ligand contact to ATP; that stretch reads SGGPDS.

It belongs to the tRNA(Ile)-lysidine synthase family.

It is found in the cytoplasm. The enzyme catalyses cytidine(34) in tRNA(Ile2) + L-lysine + ATP = lysidine(34) in tRNA(Ile2) + AMP + diphosphate + H(+). In terms of biological role, ligates lysine onto the cytidine present at position 34 of the AUA codon-specific tRNA(Ile) that contains the anticodon CAU, in an ATP-dependent manner. Cytidine is converted to lysidine, thus changing the amino acid specificity of the tRNA from methionine to isoleucine. The polypeptide is tRNA(Ile)-lysidine synthase (Methylobacterium sp. (strain 4-46)).